The chain runs to 112 residues: RRNRRVLFSQAQVYELERRFKQQKYLSAPEREHLASMIHLTPTQVKIWFQNHRYKMKRQAKDKAAQQQLQQDSGGGGGGGGAGCPQQQQAQQQSPRRVAVPVLVKDGKPCPA.

Residues 1-60 constitute a DNA-binding region (homeobox); sequence RRNRRVLFSQAQVYELERRFKQQKYLSAPEREHLASMIHLTPTQVKIWFQNHRYKMKRQA. The tract at residues 59 to 100 is disordered; the sequence is QAKDKAAQQQLQQDSGGGGGGGGAGCPQQQQAQQQSPRRVAV. Over residues 73 to 83 the composition is skewed to gly residues; that stretch reads SGGGGGGGGAG. A compositionally biased stretch (low complexity) spans 84–93; it reads CPQQQQAQQQ.

It belongs to the NK-2 homeobox family. Post-translationally, phosphorylated on serine residues.

It localises to the nucleus. Functionally, transcription factor that binds and activates the promoter of thyroid specific genes such as thyroglobulin, thyroperoxidase, and thyrotropin receptor. Crucial in the maintenance of the thyroid differentiation phenotype. May play a role in lung development and surfactant homeostasis. The protein is Thyroid transcription factor 1 (TITF1) of Cavia porcellus (Guinea pig).